Reading from the N-terminus, the 118-residue chain is UPF0344 protein BLi01172/BL01343 (118 aa).

4 helical membrane-spanning segments follow: residues 6 to 26, 33 to 53, 62 to 82, and 89 to 109; these read ITSWVIALILVFVAYGLYSSG, ITHMILRLFYIIVIITGAQLF, EYIAKALLGLITIGFMEMLLI, and AATGIWIGFIVVLLLTVVLGL.

It belongs to the UPF0344 family.

Its subcellular location is the cell membrane. This chain is UPF0344 protein BLi01172/BL01343, found in Bacillus licheniformis (strain ATCC 14580 / DSM 13 / JCM 2505 / CCUG 7422 / NBRC 12200 / NCIMB 9375 / NCTC 10341 / NRRL NRS-1264 / Gibson 46).